A 596-amino-acid chain; its full sequence is Pentatricopeptide repeat-containing protein At1g80270, mitochondrial (596 aa).

The N-terminal 69 residues, 1-69 (MFALSKVLRR…RALSSSAGTK (69 aa)), are a transit peptide targeting the mitochondrion. Residues 62 to 119 (LSSSAGTKSDQEEDDLEDGFSELEGSKSGQGSTSSDEDEGKLSADEEEEEELDLIETD) are disordered. Composition is skewed to acidic residues over residues 72–82 (QEEDDLEDGFS) and 96–117 (SDEDEGKLSADEEEEEELDLIE). 9 PPR repeats span residues 228–262 (GEVLYRTLLANCVAAGNVKKSELVFNKMKDLGFPL), 263–296 (SGFTCDQMLLLHKRIDRKKIADVLLLMEKENIKP), 297–331 (SLLTYKILIDVKGATNDISGMEQILETMKDEGVEL), 332–366 (DFQTQALTARHYSGAGLKDKAEKVLKEMEGESLEA), 367–397 (NRRAFKDLLSIYASLGREDEVKRIWKICESK), 399–433 (YFEESLAAIQAFGKLNKVQEAEAIFEKIVKMDRRA), 434–468 (SSSTYSVLLRVYVDHKMLSKGKDLVKRMAESGCRI), 469–503 (EATTWDALIKLYVEAGEVEKADSLLDKASKQSHTK), and 505–539 (MMNSFMYIMDEYSKRGDVHNTEKIFLKMREAGYTS).

It belongs to the PPR family. P subfamily.

Its subcellular location is the mitochondrion. In Arabidopsis thaliana (Mouse-ear cress), this protein is Pentatricopeptide repeat-containing protein At1g80270, mitochondrial.